Reading from the N-terminus, the 365-residue chain is Class E basic helix-loop-helix protein 22 (365 aa).

Disordered stretches follow at residues 34–93, 134–156, and 188–225; these read AFRS…GGGG, GRGS…DGRC, and HLHG…KEQK. Gly residues predominate over residues 82-93; it reads GGGGAGGGGGGG. A compositionally biased stretch (gly residues) spans 191-216; that stretch reads GGAGLPPGGSTGSGGGGSGGGGGGGS. Positions 226–280 constitute a bHLH domain; sequence ALRLNINARERRRMHDLNDALDELRAVIPYAHSPSVRKLSKIATLLLAKNYILMQ.

As to quaternary structure, heterodimer with other bHLH proteins, like TCF3/E47. As to expression, kidney, lung, brain and pancreas (insulinoma).

The protein resides in the nucleus. In terms of biological role, inhibits DNA binding of TCF3/E47 homodimers and TCF3 (E47)/NEUROD1 heterodimers and acts as a strong repressor of Neurod1 and Myod-responsive genes, probably by heterodimerization with class a basic helix-loop-helix factors. Despite the presence of an intact basic domain, does not bind to DNA. This Mesocricetus auratus (Golden hamster) protein is Class E basic helix-loop-helix protein 22 (BHLHE22).